We begin with the raw amino-acid sequence, 428 residues long: Bacteriochlorophyll synthase 44.5 kDa chain (428 aa).

12 helical membrane-spanning segments follow: residues L3–V23, L32–Y52, F73–V93, G115–P135, I144–L164, L172–W192, A225–E245, G269–L289, G291–G311, A317–I337, L358–A378, and L393–V413.

Belongs to the PucC family.

It is found in the membrane. It participates in porphyrin-containing compound metabolism; bacteriochlorophyll biosynthesis (light-independent). This Rhodobacter capsulatus (strain ATCC BAA-309 / NBRC 16581 / SB1003) protein is Bacteriochlorophyll synthase 44.5 kDa chain.